The sequence spans 195 residues: Casparian strip membrane protein 3 (195 aa).

The Cytoplasmic portion of the chain corresponds to 1–33 (MSTTIDVPESNNVAKEKVLLLGARPRPGGWKKG). A helical transmembrane segment spans residues 34 to 54 (VAIMDFILRLGAIAAAPGAAA). The Extracellular portion of the chain corresponds to 55–86 (TMGTSDQTLPFFTQFFQFEASYDSFTTFQFFV). A helical transmembrane segment spans residues 87 to 107 (ITMALVAGYLVLSLPFSIVVI). Topologically, residues 108–116 (IRPHAVGPR) are cytoplasmic. A helical membrane pass occupies residues 117 to 137 (LFLIILDTVFLTLATASGASA). The Extracellular segment spans residues 138–169 (AAIVYLAHNGNQDSNWLAICNQFGDFCAQTSG). The chain crosses the membrane as a helical span at residues 170–190 (AVVSSLVSVVIFVLLIVMSAL). The Cytoplasmic segment spans residues 191–195 (ALRRN).

The protein belongs to the Casparian strip membrane proteins (CASP) family. Homodimer and heterodimers.

The protein resides in the cell membrane. Its function is as follows. Regulates membrane-cell wall junctions and localized cell wall deposition. Required for establishment of the Casparian strip membrane domain (CSD) and the subsequent formation of Casparian strips, a cell wall modification of the root endodermis that determines an apoplastic barrier between the intraorganismal apoplasm and the extraorganismal apoplasm and prevents lateral diffusion. The sequence is that of Casparian strip membrane protein 3 from Glycine max (Soybean).